Consider the following 345-residue polypeptide: DNA-directed RNA polymerase subunit alpha (345 aa).

Residues methionine 1–arginine 234 are alpha N-terminal domain (alpha-NTD). The tract at residues leucine 266–lysine 345 is alpha C-terminal domain (alpha-CTD).

It belongs to the RNA polymerase alpha chain family. As to quaternary structure, in plastids the minimal PEP RNA polymerase catalytic core is composed of four subunits: alpha, beta, beta', and beta''. When a (nuclear-encoded) sigma factor is associated with the core the holoenzyme is formed, which can initiate transcription.

The protein localises to the plastid. It localises to the chloroplast. The enzyme catalyses RNA(n) + a ribonucleoside 5'-triphosphate = RNA(n+1) + diphosphate. Functionally, DNA-dependent RNA polymerase catalyzes the transcription of DNA into RNA using the four ribonucleoside triphosphates as substrates. This is DNA-directed RNA polymerase subunit alpha from Adiantum capillus-veneris (Maidenhair fern).